The primary structure comprises 234 residues: Ribosomal RNA small subunit methyltransferase G (234 aa).

Residues glycine 74, phenylalanine 79, 125–126 (AE), and arginine 144 contribute to the S-adenosyl-L-methionine site.

This sequence belongs to the methyltransferase superfamily. RNA methyltransferase RsmG family.

The protein resides in the cytoplasm. Its function is as follows. Specifically methylates the N7 position of a guanine in 16S rRNA. In Roseiflexus castenholzii (strain DSM 13941 / HLO8), this protein is Ribosomal RNA small subunit methyltransferase G.